Here is a 667-residue protein sequence, read N- to C-terminus: Probable potassium transport system protein Kup (667 aa).

The next 12 helical transmembrane spans lie at 16–36 (GFIIALGIVYGDIGTSPLYTM), 58–78 (VSLIIWTLTLITTIKYVLIAL), 101–121 (WLIIPAMLGGATLLSDGALTP), 146–166 (TNVILTTLLILMVLFGLQRFG), 167–187 (TGVIGKLFGPVMLVWFSVLGI), 221–241 (IFILGSIFLATTGAEALYSDL), 253–273 (WPFVKVCIILSYCGQAAWILA), 294–314 (VYLVILATLAAIIASQALISG), 343–363 (LYIPVINWSLFAVTSCTVLYF), 373–393 (YGLAITITMLMTTILLAYYLI), 399–419 (PLLASLLMAFFAFIEFIFFLA), and 431–451 (VVVLALAIVFVMVIWHAGTVI).

This sequence belongs to the HAK/KUP transporter (TC 2.A.72) family.

It is found in the cell membrane. The enzyme catalyses K(+)(in) + H(+)(in) = K(+)(out) + H(+)(out). Transport of potassium into the cell. Likely operates as a K(+):H(+) symporter. The chain is Probable potassium transport system protein Kup from Streptococcus equi subsp. zooepidemicus (strain MGCS10565).